We begin with the raw amino-acid sequence, 492 residues long: NADH-quinone oxidoreductase subunit N (492 aa).

14 consecutive transmembrane segments (helical) span residues 16–36, 44–64, 81–101, 111–131, 134–154, 168–188, 210–230, 244–264, 276–296, 306–326, 332–352, 382–402, 423–443, and 463–483; these read LLIP…VGVF, LYIT…FLEG, ISLL…LFFM, GAEF…MASS, LILI…LIAL, FIMG…LYAA, ILVF…VTLV, NALL…AVII, AFVE…PNLI, MLAY…LINT, VIFF…GILW, LAIL…FCVF, IMAI…IYIF, and FALS…QNLL.

This sequence belongs to the complex I subunit 2 family. NDH-1 is composed of 14 different subunits. Subunits NuoA, H, J, K, L, M, N constitute the membrane sector of the complex.

It localises to the cell inner membrane. It carries out the reaction a quinone + NADH + 5 H(+)(in) = a quinol + NAD(+) + 4 H(+)(out). NDH-1 shuttles electrons from NADH, via FMN and iron-sulfur (Fe-S) centers, to quinones in the respiratory chain. The immediate electron acceptor for the enzyme in this species is believed to be ubiquinone. Couples the redox reaction to proton translocation (for every two electrons transferred, four hydrogen ions are translocated across the cytoplasmic membrane), and thus conserves the redox energy in a proton gradient. The polypeptide is NADH-quinone oxidoreductase subunit N (Helicobacter hepaticus (strain ATCC 51449 / 3B1)).